A 306-amino-acid polypeptide reads, in one-letter code: Putative S-adenosyl-L-methionine-dependent methyltransferase Mvan_1345 (306 aa).

Residues D134 and 163 to 164 (DL) contribute to the S-adenosyl-L-methionine site.

This sequence belongs to the UPF0677 family.

Functionally, exhibits S-adenosyl-L-methionine-dependent methyltransferase activity. This is Putative S-adenosyl-L-methionine-dependent methyltransferase Mvan_1345 from Mycolicibacterium vanbaalenii (strain DSM 7251 / JCM 13017 / BCRC 16820 / KCTC 9966 / NRRL B-24157 / PYR-1) (Mycobacterium vanbaalenii).